The primary structure comprises 950 residues: Sodium/calcium exchanger Calx (950 aa).

Residues 1 to 22 (MQLLLKSIFTCALFVIFVYATA) form the signal peptide. At 23–120 (QSLLKVQETE…PQRNISVGDR (98 aa)) the chain is on the extracellular side. N-linked (GlcNAc...) asparagine glycosylation is found at Asn39, Asn47, and Asn114. Residues 121-141 (LVRGFVYFVLLIYLFVGVSII) traverse the membrane as a helical segment. The Cytoplasmic portion of the chain corresponds to 142 to 179 (ADRFMAAIEAITSIERAVVVKGPNNTKQVMHVRIWNET). Residues 180–200 (VANLTLMALGSSAPEILLSVI) form a helical membrane-spanning segment. Topologically, residues 201–216 (EIYAKDFESGDLGPGT) are extracellular. Residues 217–237 (IVGSAAYNLFMIIAVCMIWIP) form a helical membrane-spanning segment. Residues 238–257 (AGEVRRIRHLRVFFVTALFS) are Cytoplasmic-facing. 2 consecutive transmembrane segments (helical) span residues 258 to 278 (VFAY…VILV) and 279 to 299 (WEAI…YIAE). The Cytoplasmic segment spans residues 300-749 (RRLLVYKYMD…NDDEEEEVPS (450 aa)). Residues 301–318 (RLLVYKYMDKNYRVNKRG) are corresponds to the exchanger inhibitory peptide (XIP) found in other sodium/calcium exchange proteins and thought to be involved in calmodulin binding. The region spanning 440–551 (DPIRMYFEPG…MIATVMILDD (112 aa)) is the Calx-beta 1 domain. Residues Glu455, Asp490, Asp515, Asp516, Val518, Glu520, Glu523, Asp550, Asp551, and Asp552 each contribute to the Ca(2+) site. The 140-residue stretch at 555 to 694 (GIFAFTDSVF…LTTAYVRIRE (140 aa)) folds into the Calx-beta 2 domain. The chain crosses the membrane as a helical span at residues 750-770 (CFSYVSHFVCLFWKVLFAFVP). Residues 771-775 (PTDIC) are Extracellular-facing. The helical transmembrane segment at 776 to 796 (GGYVTFVVSIFVIGVITAIIG) threads the bilayer. Residues 797-813 (DAASYFGCALNIKDSVT) are Cytoplasmic-facing. A helical transmembrane segment spans residues 814–834 (AILFVALGTSIPDTFASMIAA). At 835-848 (KHDEGADNCIGNVT) the chain is on the extracellular side. The N-linked (GlcNAc...) asparagine glycan is linked to Asn846. The chain crosses the membrane as a helical span at residues 849 to 869 (GSNAVNVFLGIGLAWTIAAVY). At 870–883 (HSSHGMTFNVEPGT) the chain is on the cytoplasmic side. The helical transmembrane segment at 884–904 (IGFAVALFCGEALIAIMLIMF) threads the bilayer. Over 905-923 (RRWHKGIGAELGGPKVSKY) the chain is Extracellular. The chain crosses the membrane as a helical span at residues 924–944 (ISAAILVFLWVFYVVICILEA). Topologically, residues 945–950 (YDVIRV) are cytoplasmic.

The protein belongs to the Ca(2+):cation antiporter (CaCA) (TC 2.A.19) family. SLC8 subfamily. Ubiquitously expressed with higher expression in head compared to body (at protein level). Enriched in photoreceptor cells of the eye (at protein level). In the adult head, expressed in retina, optic ganglia and all neuronal tissues.

It localises to the cell membrane. The protein localises to the cell projection. It is found in the rhabdomere membrane. It catalyses the reaction Ca(2+)(in) + 3 Na(+)(out) = Ca(2+)(out) + 3 Na(+)(in). Activated by a Na(+) electrochemical gradient but also undergoes Na(2+)-dependent inactivation. Inhibited by micromolar levels of cytoplasmic Ca(2+), which is the opposite of most characterized mammalian homologs. Its activity is regulated as follows. Exhibits greater extent of inhibition by Ca(2+) than isoform D/1.2. With respect to regulation, exhibits greater Na(2+)-dependent inactivation than isoform A/1.1, probably due to greater stability of the inactive Na(2+)-bound form. Its function is as follows. Na(+)/Ca(2+) antiporter that couples the energy of a Na(+) electrochemical gradient to the movement of Ca(2+) against an electrochemical gradient across a membrane, which contributes to the regulation of cytoplasmic Ca(2+) levels. Mediates Na(+)/Ca(2+) exchange in photoreceptor cells and involved in controlling Ca(2+) levels during phototransduction, affecting magnitude of the photoresponse, activation kinetics, signal amplification, response termination, and light adaptation. Light induced depolarization of photoreceptor cells, resulting in Na(+) and Ca(2+) entry through trp/transient receptor potential protein channels, is essential for photoreceptor cell function but may result in toxic levels of cytoplasmic Ca(2+). Na(+)/Ca(2+) antiporter regulation of Ca(2+) levels protects photoreceptor cells from light-dependent retinal degeneration. The sequence is that of Sodium/calcium exchanger Calx from Drosophila melanogaster (Fruit fly).